The sequence spans 356 residues: Torsin-like protein (356 aa).

A signal peptide spans 1–18; it reads MKLDYVLLLLFHLCFVNT. ATP is bound at residue 110 to 117; that stretch reads GYTGSGKN. N125 and N250 each carry an N-linked (GlcNAc...) asparagine glycan.

It belongs to the ClpA/ClpB family. Torsin subfamily.

It is found in the endoplasmic reticulum lumen. May serve as a molecular chaperone assisting in the proper folding of secreted and/or membrane proteins. This is Torsin-like protein (ooc-5) from Caenorhabditis elegans.